The primary structure comprises 388 residues: F-box protein At3g49510 (388 aa).

An F-box domain is found at 1–47 (MTTISDLSDDLVGDILSRVPFTSLISVRSTCKKWNALSKNQIFGRKT).

This is F-box protein At3g49510 from Arabidopsis thaliana (Mouse-ear cress).